Here is a 509-residue protein sequence, read N- to C-terminus: 2-isopropylmalate synthase (509 aa).

Positions 5 to 267 constitute a Pyruvate carboxyltransferase domain; the sequence is IQIFDTTLRD…QTALNLEETK (263 aa). Positions 14, 202, 204, and 238 each coordinate Mn(2+). Residues 391–509 are regulatory domain; sequence KLETLQLQYV…AAENVEKVGN (119 aa).

Belongs to the alpha-IPM synthase/homocitrate synthase family. LeuA type 1 subfamily. As to quaternary structure, homodimer. Requires Mn(2+) as cofactor.

Its subcellular location is the cytoplasm. The enzyme catalyses 3-methyl-2-oxobutanoate + acetyl-CoA + H2O = (2S)-2-isopropylmalate + CoA + H(+). The protein operates within amino-acid biosynthesis; L-leucine biosynthesis; L-leucine from 3-methyl-2-oxobutanoate: step 1/4. Functionally, catalyzes the condensation of the acetyl group of acetyl-CoA with 3-methyl-2-oxobutanoate (2-ketoisovalerate) to form 3-carboxy-3-hydroxy-4-methylpentanoate (2-isopropylmalate). This chain is 2-isopropylmalate synthase, found in Staphylococcus aureus (strain USA300).